A 247-amino-acid polypeptide reads, in one-letter code: Mast cell protease 2 (247 aa).

A signal peptide spans 1-19 (MHLLALHLLLFLLGSRAKA). A propeptide spans 20-21 (GE) (activation peptide). One can recognise a Peptidase S1 domain in the interval 22-245 (IIGGTECKPH…YRPWINKILR (224 aa)). A disulfide bridge links cysteine 51 with cysteine 67. The Charge relay system role is filled by histidine 66. Residue asparagine 80 is glycosylated (N-linked (GlcNAc...) asparagine). The Charge relay system role is filled by aspartate 110. 2 disulfides stabilise this stretch: cysteine 144/cysteine 209 and cysteine 175/cysteine 188. The active-site Charge relay system is serine 203.

Belongs to the peptidase S1 family. Granzyme subfamily.

This Meriones unguiculatus (Mongolian jird) protein is Mast cell protease 2.